The sequence spans 81 residues: Large ribosomal subunit protein bL31B (81 aa).

It belongs to the bacterial ribosomal protein bL31 family. Type B subfamily. Part of the 50S ribosomal subunit.

This is Large ribosomal subunit protein bL31B from Bdellovibrio bacteriovorus (strain ATCC 15356 / DSM 50701 / NCIMB 9529 / HD100).